The chain runs to 247 residues: ATP synthase subunit a, chloroplastic (247 aa).

The next 5 membrane-spanning stretches (helical) occupy residues 38–58 (QVLI…SIAV), 95–115 (VPFI…GALL), 134–154 (INTT…AGLT), 199–219 (LVVV…VMFL), and 220–240 (GLFT…AYIG).

This sequence belongs to the ATPase A chain family. As to quaternary structure, F-type ATPases have 2 components, CF(1) - the catalytic core - and CF(0) - the membrane proton channel. CF(1) has five subunits: alpha(3), beta(3), gamma(1), delta(1), epsilon(1). CF(0) has four main subunits: a, b, b' and c.

The protein resides in the plastid. It is found in the chloroplast thylakoid membrane. Key component of the proton channel; it plays a direct role in the translocation of protons across the membrane. This Eucalyptus globulus subsp. globulus (Tasmanian blue gum) protein is ATP synthase subunit a, chloroplastic.